The following is a 157-amino-acid chain: 6,7-dimethyl-8-ribityllumazine synthase (157 aa).

5-amino-6-(D-ribitylamino)uracil-binding positions include Phe23, 57–59 (AFE), and 81–83 (AVI). A (2S)-2-hydroxy-3-oxobutyl phosphate-binding site is contributed by 86–87 (AT). The Proton donor role is filled by His89. Phe114 contributes to the 5-amino-6-(D-ribitylamino)uracil binding site. A (2S)-2-hydroxy-3-oxobutyl phosphate-binding site is contributed by Arg128.

The protein belongs to the DMRL synthase family.

The enzyme catalyses (2S)-2-hydroxy-3-oxobutyl phosphate + 5-amino-6-(D-ribitylamino)uracil = 6,7-dimethyl-8-(1-D-ribityl)lumazine + phosphate + 2 H2O + H(+). It participates in cofactor biosynthesis; riboflavin biosynthesis; riboflavin from 2-hydroxy-3-oxobutyl phosphate and 5-amino-6-(D-ribitylamino)uracil: step 1/2. Functionally, catalyzes the formation of 6,7-dimethyl-8-ribityllumazine by condensation of 5-amino-6-(D-ribitylamino)uracil with 3,4-dihydroxy-2-butanone 4-phosphate. This is the penultimate step in the biosynthesis of riboflavin. This is 6,7-dimethyl-8-ribityllumazine synthase from Desulforapulum autotrophicum (strain ATCC 43914 / DSM 3382 / VKM B-1955 / HRM2) (Desulfobacterium autotrophicum).